The sequence spans 324 residues: Putative ribose-phosphate pyrophosphokinase 2 (324 aa).

ATP contacts are provided by residues 43-45 (DGE) and 102-103 (RQ). A Mg(2+)-binding site is contributed by His136. D-ribose 5-phosphate contacts are provided by residues Asp225 and 229-233 (NTGKT).

The protein belongs to the ribose-phosphate pyrophosphokinase family. Class I subfamily. As to quaternary structure, homohexamer. Mg(2+) serves as cofactor.

It localises to the cytoplasm. It carries out the reaction D-ribose 5-phosphate + ATP = 5-phospho-alpha-D-ribose 1-diphosphate + AMP + H(+). It participates in metabolic intermediate biosynthesis; 5-phospho-alpha-D-ribose 1-diphosphate biosynthesis; 5-phospho-alpha-D-ribose 1-diphosphate from D-ribose 5-phosphate (route I): step 1/1. Its function is as follows. Involved in the biosynthesis of the central metabolite phospho-alpha-D-ribosyl-1-pyrophosphate (PRPP) via the transfer of pyrophosphoryl group from ATP to 1-hydroxyl of ribose-5-phosphate (Rib-5-P). In Streptococcus agalactiae serotype III (strain NEM316), this protein is Putative ribose-phosphate pyrophosphokinase 2.